Here is a 112-residue protein sequence, read N- to C-terminus: Large ribosomal subunit protein eL22 (112 aa).

This sequence belongs to the eukaryotic ribosomal protein eL22 family. Component of the large ribosomal subunit.

The protein localises to the cytoplasm. The polypeptide is Large ribosomal subunit protein eL22 (RPL22) (Encephalitozoon cuniculi (strain GB-M1) (Microsporidian parasite)).